The chain runs to 300 residues: Phosphatidylserine decarboxylase proenzyme (300 aa).

Residues aspartate 113, histidine 169, and serine 256 each act as charge relay system; for autoendoproteolytic cleavage activity in the active site. Residue serine 256 is the Schiff-base intermediate with substrate; via pyruvic acid; for decarboxylase activity of the active site. Position 256 is a pyruvic acid (Ser); by autocatalysis (serine 256).

The protein belongs to the phosphatidylserine decarboxylase family. PSD-B subfamily. Prokaryotic type II sub-subfamily. As to quaternary structure, heterodimer of a large membrane-associated beta subunit and a small pyruvoyl-containing alpha subunit. It depends on pyruvate as a cofactor. Is synthesized initially as an inactive proenzyme. Formation of the active enzyme involves a self-maturation process in which the active site pyruvoyl group is generated from an internal serine residue via an autocatalytic post-translational modification. Two non-identical subunits are generated from the proenzyme in this reaction, and the pyruvate is formed at the N-terminus of the alpha chain, which is derived from the carboxyl end of the proenzyme. The autoendoproteolytic cleavage occurs by a canonical serine protease mechanism, in which the side chain hydroxyl group of the serine supplies its oxygen atom to form the C-terminus of the beta chain, while the remainder of the serine residue undergoes an oxidative deamination to produce ammonia and the pyruvoyl prosthetic group on the alpha chain. During this reaction, the Ser that is part of the protease active site of the proenzyme becomes the pyruvoyl prosthetic group, which constitutes an essential element of the active site of the mature decarboxylase.

The protein resides in the cell membrane. The enzyme catalyses a 1,2-diacyl-sn-glycero-3-phospho-L-serine + H(+) = a 1,2-diacyl-sn-glycero-3-phosphoethanolamine + CO2. It functions in the pathway phospholipid metabolism; phosphatidylethanolamine biosynthesis; phosphatidylethanolamine from CDP-diacylglycerol: step 2/2. Functionally, catalyzes the formation of phosphatidylethanolamine (PtdEtn) from phosphatidylserine (PtdSer). The chain is Phosphatidylserine decarboxylase proenzyme from Ruminiclostridium cellulolyticum (strain ATCC 35319 / DSM 5812 / JCM 6584 / H10) (Clostridium cellulolyticum).